Here is a 576-residue protein sequence, read N- to C-terminus: MEFRVHLQADNEQKIFQNQMKPEPEASYLINQRRSANYKPNIWKNDFLDQSLISKYDGDEYRKLSEKLIEEVKIYISAETMDLVAKLELIDSVRKLGLANLFEKEIKEALDSIAAIESDNLGTRDDLYGTALHFKILRQHGYKVSQDIFGRFMDEKGTLENHHFAHLKGMLELFEASNLGFEGEDILDEAKASLTLALRDSGHICYPDSNLSRDVVHSLELPSHRRVQWFDVKWQINAYEKDICRVNATLLELAKLNFNVVQAQLQKNLREASRWWANLGIADNLKFARDRLVECFACAVGVAFEPEHSSFRICLTKVINLVLIIDDVYDIYGSEEELKHFTNAVDRWDSRETEQLPECMKMCFQVLYNTTCEIAREIEEENGWNQVLPQLTKVWADFCKALLVEAEWYNKSHIPTLEEYLRNGCISSSVSVLLVHSFFSITHEGTKEMADFLHKNEDLLYNISLIVRLNNDLGTSAAEQERGDSPSSIVCYMREVNASEETARKNIKGMIDNAWKKVNGKCFTTNQVPFLSSFMNNATNMARVAHSLYKDGDGFGDQEKGPRTHILSLLFQPLVN.

Residues Arg-289, Asp-326, Asp-330, Arg-468, and Asn-471 each coordinate (2E,6E)-farnesyl diphosphate. 2 residues coordinate Mg(2+): Asp-326 and Asp-330. Residues 326–330 carry the DDXXD motif motif; sequence DDVYD. Mg(2+) is bound by residues Asn-471, Thr-475, and Glu-479. K(+) contacts are provided by Asp-484 and Ser-487.

Belongs to the terpene synthase family. Tpsb subfamily. Monomer. Mg(2+) serves as cofactor. It depends on Mn(2+) as a cofactor. K(+) is required as a cofactor.

The protein localises to the cytoplasm. It carries out the reaction (2E,6E)-farnesyl diphosphate = (3E,6E)-alpha-farnesene + diphosphate. In terms of biological role, sesquiterpene synthase catalyzing the production of (E,E)-alpha-farnesene, the predominant terpene produced during storage of fruits. Produces all six isomers (E,E)-alpha-farnesene, (Z,E)-alpha-farnesene, (E,Z)-alpha-farnesene, (Z,Z)-alpha-farnesene, (E)-beta-farnesene and (Z)-beta-farnesene from a mix of isomeric forms of the farnesyl diphosphate precursor. Able to convert geranyl diphosphate to the monoterpenes (E)-beta-ocimene, linalool and beta-myrcene. Also has a prenyltransferase activity producing alpha-farnesene directly from geranyl diphosphate and isoprenyl diphosphate. This chain is (E,E)-alpha-farnesene synthase (AFS1), found in Malus domestica (Apple).